A 304-amino-acid polypeptide reads, in one-letter code: UDP-3-O-acyl-N-acetylglucosamine deacetylase (304 aa).

His-79, His-238, and Asp-242 together coordinate Zn(2+). The active-site Proton donor is His-265.

This sequence belongs to the LpxC family. The cofactor is Zn(2+).

The enzyme catalyses a UDP-3-O-[(3R)-3-hydroxyacyl]-N-acetyl-alpha-D-glucosamine + H2O = a UDP-3-O-[(3R)-3-hydroxyacyl]-alpha-D-glucosamine + acetate. The protein operates within glycolipid biosynthesis; lipid IV(A) biosynthesis; lipid IV(A) from (3R)-3-hydroxytetradecanoyl-[acyl-carrier-protein] and UDP-N-acetyl-alpha-D-glucosamine: step 2/6. Its function is as follows. Catalyzes the hydrolysis of UDP-3-O-myristoyl-N-acetylglucosamine to form UDP-3-O-myristoylglucosamine and acetate, the committed step in lipid A biosynthesis. This is UDP-3-O-acyl-N-acetylglucosamine deacetylase from Pseudoalteromonas atlantica (strain T6c / ATCC BAA-1087).